The following is a 248-amino-acid chain: Coproheme decarboxylase (248 aa).

Fe-coproporphyrin III is bound by residues arginine 130, 144-148 (YPMDK), histidine 171, glutamine 184, and serine 222. Tyrosine 144 is an active-site residue.

Belongs to the ChdC family. Type 1 subfamily. Fe-coproporphyrin III is required as a cofactor.

It catalyses the reaction Fe-coproporphyrin III + 2 H2O2 + 2 H(+) = heme b + 2 CO2 + 4 H2O. The catalysed reaction is Fe-coproporphyrin III + H2O2 + H(+) = harderoheme III + CO2 + 2 H2O. It carries out the reaction harderoheme III + H2O2 + H(+) = heme b + CO2 + 2 H2O. The protein operates within porphyrin-containing compound metabolism; protoheme biosynthesis. Its function is as follows. Involved in coproporphyrin-dependent heme b biosynthesis. Catalyzes the decarboxylation of Fe-coproporphyrin III (coproheme) to heme b (protoheme IX), the last step of the pathway. The reaction occurs in a stepwise manner with a three-propionate intermediate. The polypeptide is Coproheme decarboxylase (Geobacillus thermodenitrificans (strain NG80-2)).